The primary structure comprises 99 residues: Integration host factor subunit alpha (99 aa).

This sequence belongs to the bacterial histone-like protein family. In terms of assembly, heterodimer of an alpha and a beta chain.

This protein is one of the two subunits of integration host factor, a specific DNA-binding protein that functions in genetic recombination as well as in transcriptional and translational control. This Xylella fastidiosa (strain M12) protein is Integration host factor subunit alpha.